Reading from the N-terminus, the 355-residue chain is MNIAALLSGGVDSSVVVHLLCEQGYKPTLFYIKIGMDGAEYMDCSAEEDIEMSTAIARKYGLSLEVVDLHKEYWENVAAYAIDKIKKGLTPNPDVMCNKLIKFGCFEQQVGKNFDFTATGHYATTIRQDGKTWLGTAKDPVKDQTDFLAQIDYLQVSKLMFPIGGLMKQEVREIASRAGLPSARRKDSQGICFLGKINYNDFVRRFLGEREGAIIELETGKKVGTHRGYWFHTIGQRKGLGLSGGPWFVIKKDVEENIIYVSHGYGVETQFGSEFRINDFHFITENPWKDAGKEIDITFKIRHTPEFTKGKLVQEEGGQFRILSSEKLQGIAPGQFGVIYDEEAGICVGSGEITR.

6 to 13 (LLSGGVDS) is an ATP binding site. Residues 92–94 (NPD) form an interaction with target base in tRNA region. Cys97 (nucleophile) is an active-site residue. A disulfide bond links Cys97 and Cys192. Residue Gly120 participates in ATP binding. The segment at 142 to 144 (KDQ) is interaction with tRNA. Catalysis depends on Cys192, which acts as the Cysteine persulfide intermediate.

It belongs to the MnmA/TRMU family.

Its subcellular location is the cytoplasm. The catalysed reaction is S-sulfanyl-L-cysteinyl-[protein] + uridine(34) in tRNA + AH2 + ATP = 2-thiouridine(34) in tRNA + L-cysteinyl-[protein] + A + AMP + diphosphate + H(+). Functionally, catalyzes the 2-thiolation of uridine at the wobble position (U34) of tRNA, leading to the formation of s(2)U34. This Bacteroides thetaiotaomicron (strain ATCC 29148 / DSM 2079 / JCM 5827 / CCUG 10774 / NCTC 10582 / VPI-5482 / E50) protein is tRNA-specific 2-thiouridylase MnmA 1.